The primary structure comprises 601 residues: Elongation factor 4 (601 aa).

The tr-type G domain maps to 7–189 (RNIRNFSIIA…AIVHRIPPPK (183 aa)). Residues 19-24 (DHGKST) and 136-139 (NKID) each bind GTP.

It belongs to the TRAFAC class translation factor GTPase superfamily. Classic translation factor GTPase family. LepA subfamily.

It is found in the cell inner membrane. It carries out the reaction GTP + H2O = GDP + phosphate + H(+). Functionally, required for accurate and efficient protein synthesis under certain stress conditions. May act as a fidelity factor of the translation reaction, by catalyzing a one-codon backward translocation of tRNAs on improperly translocated ribosomes. Back-translocation proceeds from a post-translocation (POST) complex to a pre-translocation (PRE) complex, thus giving elongation factor G a second chance to translocate the tRNAs correctly. Binds to ribosomes in a GTP-dependent manner. The chain is Elongation factor 4 from Xanthomonas campestris pv. campestris (strain 8004).